A 122-amino-acid chain; its full sequence is MASAPAQQPTLTVEQARVVLSEVIQAFSVPENAARMEEARESACNDMGKMLQLVLPVATQIQQEVIKAYGFNNEGEGVLKFARLVKMYETQDPEIAAMSVKLKSLLLPPLSTPPIGSGIPTS.

This sequence belongs to the UPF0456 family.

It localises to the cytoplasm. The sequence is that of Protein C10 from Danio rerio (Zebrafish).